The following is a 525-amino-acid chain: Bifunctional pantoate ligase/cytidylate kinase (525 aa).

Residues 1 to 292 (MDNVPIIRTV…VGSARLIDNM (292 aa)) are pantoate--beta-alanine ligase. ATP is bound at residue 44-51 (MGALHAGH). His-51 acts as the Proton donor in catalysis. (R)-pantoate is bound at residue Gln-75. A beta-alanine-binding site is contributed by Gln-75. Residue 162 to 165 (GQKD) participates in ATP binding. Gln-168 is a binding site for (R)-pantoate. ATP-binding positions include Ile-191 and 199–202 (LSSR). The segment at 293 to 525 (LLDARLPILA…LYQERFPDRA (233 aa)) is cytidylate kinase.

It in the N-terminal section; belongs to the pantothenate synthetase family. This sequence in the C-terminal section; belongs to the cytidylate kinase family. Type 1 subfamily.

It is found in the cytoplasm. The catalysed reaction is (R)-pantoate + beta-alanine + ATP = (R)-pantothenate + AMP + diphosphate + H(+). It carries out the reaction CMP + ATP = CDP + ADP. It catalyses the reaction dCMP + ATP = dCDP + ADP. It functions in the pathway cofactor biosynthesis; (R)-pantothenate biosynthesis; (R)-pantothenate from (R)-pantoate and beta-alanine: step 1/1. Functionally, catalyzes the condensation of pantoate with beta-alanine in an ATP-dependent reaction via a pantoyl-adenylate intermediate. In terms of biological role, catalyzes the transfer of a phosphate group from ATP to either CMP or dCMP to form CDP or dCDP and ADP, respectively. The sequence is that of Bifunctional pantoate ligase/cytidylate kinase from Acaryochloris marina (strain MBIC 11017).